A 781-amino-acid polypeptide reads, in one-letter code: Death domain-containing protein 1 (781 aa).

ZU5 domains follow at residues 167 to 301 (IMEK…VSCL) and 302 to 483 (KKES…VLHL). In terms of domain architecture, Death spans 679-764 (DNLLHWLAEE…DLAEELKFKW (86 aa)).

This chain is Death domain-containing protein 1 (DTHD1), found in Homo sapiens (Human).